The following is a 419-amino-acid chain: Lipoyl synthase, mitochondrial (419 aa).

The transit peptide at 1 to 26 (MAVCAGRLKCFGNPAVSLRTAASRAY) directs the protein to the mitochondrion. Over residues 28–47 (TTTSPDPAIPSSSSASSSSA) the composition is skewed to low complexity. The interval 28–61 (TTTSPDPAIPSSSSASSSSALPKRPQTSFRDKLN) is disordered. Positions 136, 141, 147, 167, 171, 174, and 382 each coordinate [4Fe-4S] cluster. Residues 150–371 (GSSKSAATAT…KDRALEMGFL (222 aa)) enclose the Radical SAM core domain. Residues 399 to 419 (AESTGPESTNVPNVTPDAIVR) form a disordered region.

Belongs to the radical SAM superfamily. Lipoyl synthase family. [4Fe-4S] cluster is required as a cofactor.

The protein resides in the mitochondrion. It catalyses the reaction [[Fe-S] cluster scaffold protein carrying a second [4Fe-4S](2+) cluster] + N(6)-octanoyl-L-lysyl-[protein] + 2 oxidized [2Fe-2S]-[ferredoxin] + 2 S-adenosyl-L-methionine + 4 H(+) = [[Fe-S] cluster scaffold protein] + N(6)-[(R)-dihydrolipoyl]-L-lysyl-[protein] + 4 Fe(3+) + 2 hydrogen sulfide + 2 5'-deoxyadenosine + 2 L-methionine + 2 reduced [2Fe-2S]-[ferredoxin]. It participates in protein modification; protein lipoylation via endogenous pathway; protein N(6)-(lipoyl)lysine from octanoyl-[acyl-carrier-protein]: step 2/2. Catalyzes the radical-mediated insertion of two sulfur atoms into the C-6 and C-8 positions of the octanoyl moiety bound to the lipoyl domains of lipoate-dependent enzymes, thereby converting the octanoylated domains into lipoylated derivatives. The chain is Lipoyl synthase, mitochondrial from Coccidioides posadasii (strain C735) (Valley fever fungus).